Reading from the N-terminus, the 369-residue chain is MRVLGFMTGTSLDAVDMAVLETDGEGISAFGPAGERKLTDATREILLEATEAALKWERGEPEPQIFAKAAVTVAEEHFAAAEAFLAEHGLVWSEFDLLGMHGQTVLHERPQDGVPGRTVQLGDAGLLASLTGRPVAHDFRSADVAAGGEGAPLAPIYHLARARASGLEPPLAVLNVGGVANVTFWSGPGDFAAFDTGPGNGMIDLLVQARKAGRYDAGGRYASVGRVDEAVVRALLAHPYFEAPAPKSLDRYDFSLEPLEPLQLEDACATLVAFTAEAVGRGFELMGEVPREVVVTGGGRHNPEIMKALAARLPAPVKTAEDHGWRGDSIEAEAFAYLAARCARGQPISFPKTTGVARPMTGGRIVQPE.

An ATP-binding site is contributed by 9 to 16 (GTSLDAVD).

The protein belongs to the anhydro-N-acetylmuramic acid kinase family.

The catalysed reaction is 1,6-anhydro-N-acetyl-beta-muramate + ATP + H2O = N-acetyl-D-muramate 6-phosphate + ADP + H(+). It participates in amino-sugar metabolism; 1,6-anhydro-N-acetylmuramate degradation. The protein operates within cell wall biogenesis; peptidoglycan recycling. Its function is as follows. Catalyzes the specific phosphorylation of 1,6-anhydro-N-acetylmuramic acid (anhMurNAc) with the simultaneous cleavage of the 1,6-anhydro ring, generating MurNAc-6-P. Is required for the utilization of anhMurNAc either imported from the medium or derived from its own cell wall murein, and thus plays a role in cell wall recycling. The chain is Anhydro-N-acetylmuramic acid kinase from Phenylobacterium zucineum (strain HLK1).